Consider the following 124-residue polypeptide: Phosphoribosyl-ATP pyrophosphatase (124 aa).

The protein belongs to the PRA-PH family.

The protein localises to the cytoplasm. It catalyses the reaction 1-(5-phospho-beta-D-ribosyl)-ATP + H2O = 1-(5-phospho-beta-D-ribosyl)-5'-AMP + diphosphate + H(+). Its pathway is amino-acid biosynthesis; L-histidine biosynthesis; L-histidine from 5-phospho-alpha-D-ribose 1-diphosphate: step 2/9. This is Phosphoribosyl-ATP pyrophosphatase from Ralstonia pickettii (strain 12J).